Here is a 266-residue protein sequence, read N- to C-terminus: Glutamate racemase (266 aa).

Substrate-binding positions include 10–11 and 42–43; these read DS and YG. The active-site Proton donor/acceptor is the C73. 74 to 75 is a binding site for substrate; the sequence is NT. C183 (proton donor/acceptor) is an active-site residue. Residue 184 to 185 participates in substrate binding; it reads TH.

It belongs to the aspartate/glutamate racemases family.

It carries out the reaction L-glutamate = D-glutamate. It participates in cell wall biogenesis; peptidoglycan biosynthesis. Provides the (R)-glutamate required for cell wall biosynthesis. This is Glutamate racemase from Lactobacillus johnsonii (strain CNCM I-12250 / La1 / NCC 533).